A 203-amino-acid polypeptide reads, in one-letter code: Eukaryotic translation initiation factor isoform 4E (203 aa).

A compositionally biased stretch (low complexity) spans 1 to 25 (MATETAGAVVESSSAATVPSPAPEA). A disordered region spans residues 1–27 (MATETAGAVVESSSAATVPSPAPEAGS). MRNA-binding positions include 47 to 52 (QGAAWG), lysine 79, and 97 to 98 (WE). Cysteine 102 and cysteine 141 are oxidised to a cystine. 148 to 153 (RQRQDK) contacts mRNA.

Belongs to the eukaryotic initiation factor 4E family. EIF4F is a multi-subunit complex, the composition of which varies with external and internal environmental conditions. It is composed of at least EIF4A, EIF4E and EIF4G. EIF4E is also known to interact with other partners. In higher plants two isoforms of EIF4F have been identified, named isoform EIF4F and isoform EIF(iso)4F. Isoform EIF4F has subunits p220 and p26, whereas isoform EIF(iso)4F has subunits p82 and p28. In terms of assembly, (Microbial infection) Interacts with the potyvirus peanut stripe virus (PStV) helper component proteinase (HC-Pro) in the cytoplasm and with PStV viral genome-linked protein (VPg) in the nucleus; these interactions are possible in susceptible hosts but impaired in resistant plants. Post-translationally, according to the redox status, the Cys-102-Cys-141 disulfide bridge may have a role in regulating protein function by affecting its ability to bind capped mRNA. Expressed ubiquitously with highest levels in young leaves and roots, and lowest levels in flowers.

Its subcellular location is the cytoplasm. It localises to the nucleus. In terms of biological role, component of the protein complex eIF4F, which is involved in the recognition of the mRNA cap, ATP-dependent unwinding of 5'-terminal secondary structure and recruitment of mRNA to the ribosome. Recognizes and binds the 7-methylguanosine-containing mRNA cap during an early step in the initiation of protein synthesis and facilitates ribosome binding by inducing the unwinding of the mRNAs secondary structures. Key component of recessive resistance to potyviruses such as peanut stripe virus (PStV). Functionally, (Microbial infection) Susceptibility host factor required for viral infection by recruiting viral RNAs to the host ribosomal complex via an interaction with viral genome-linked protein (VPg). The sequence is that of Eukaryotic translation initiation factor isoform 4E from Arachis hypogaea (Peanut).